The sequence spans 511 residues: DnaJ homolog 1, mitochondrial (511 aa).

The N-terminal 55 residues, 1–55, are a transit peptide targeting the mitochondrion; sequence MAFQQGVLSRCSGVFRHHVGHSRHINNILYRHAIAFASIAPRIPKSSFHTSAIRN. The 69-residue stretch at 59 to 127 folds into the J domain; that stretch reads FKDPYDTLGL…RQQYDQFGPA (69 aa). The CR-type zinc-finger motif lies at 217–297; the sequence is SKNVQLRFSA…CHGEGVQVNR (81 aa). 4 CXXCXGXG motif repeats span residues 230–237, 247–254, 269–276, and 285–292; these read CSTCSGTG, CSTCHGTG, CPTCNGEG, and CTKCHGEG.

It is found in the mitochondrion. In terms of biological role, plays a role in mitochondrial biogenesis and protein folding. In Saccharomyces cerevisiae (strain ATCC 204508 / S288c) (Baker's yeast), this protein is DnaJ homolog 1, mitochondrial (MDJ1).